The chain runs to 379 residues: Sialidase-2 (379 aa).

Positions 20–23 match the FRIP motif motif; the sequence is YRIP. The substrate site is built by Arg21 and Arg41. Catalysis depends on Asp46, which acts as the Proton acceptor. Residues 127 to 138 form a BNR 1 repeat; that stretch reads VSSTDHGRTWSP. Tyr179 and Tyr181 together coordinate substrate. One copy of the BNR 2 repeat lies at 197–208; the sequence is FISLDHGHTWKL. Glu218, Arg237, and Arg303 together coordinate substrate. Arg303 is an active-site residue. The Nucleophile role is filled by Tyr333. Glu354 is an active-site residue.

Belongs to the glycosyl hydrolase 33 family. Highly expressed in heart.

Its subcellular location is the cytoplasm. The protein localises to the cytosol. It catalyses the reaction Hydrolysis of alpha-(2-&gt;3)-, alpha-(2-&gt;6)-, alpha-(2-&gt;8)- glycosidic linkages of terminal sialic acid residues in oligosaccharides, glycoproteins, glycolipids, colominic acid and synthetic substrates.. The enzyme catalyses a ganglioside GD1a + H2O = a ganglioside GM1 + N-acetylneuraminate. The catalysed reaction is a ganglioside GM1 + H2O = a ganglioside GA1 + N-acetylneuraminate. It carries out the reaction a ganglioside GT1b + H2O = a ganglioside GD1b + N-acetylneuraminate. It catalyses the reaction a ganglioside GD1b + H2O = a ganglioside GM1 + N-acetylneuraminate. The enzyme catalyses a ganglioside GD3 + H2O = a ganglioside GM3 + N-acetylneuraminate. The catalysed reaction is a ganglioside GM3 + H2O = a beta-D-galactosyl-(1-&gt;4)-beta-D-glucosyl-(1&lt;-&gt;1)-ceramide + N-acetylneuraminate. It carries out the reaction a ganglioside GM2 + H2O = a ganglioside GA2 + N-acetylneuraminate. It catalyses the reaction a neolactoside IV(3)-alpha-NeuAc-nLc4Cer(d18:1(4E)) + H2O = a neolactoside nLc4Cer(d18:1(4E)) + N-acetylneuraminate. The enzyme catalyses N-acetyl-alpha-neuraminosyl-(2-&gt;3)-beta-D-galactosyl-(1-&gt;4)-D-glucose + H2O = lactose + N-acetylneuraminate. In terms of biological role, exo-alpha-sialidase that catalyzes the hydrolytic cleavage of the terminal sialic acid (N-acetylneuraminic acid, Neu5Ac) of a glycan moiety in the catabolism of glycolipids, glycoproteins and oligosacharides. Recognizes sialyl linkage positions of the glycan moiety as well as the supramolecular organization of the sialoglycoconjugate. Displays preference for alpha-(2-&gt;3)-sialylated GD1a and GT1B gangliosides over alpha-(2-&gt;8)-sialylated GD1b, in both monomeric forms and micelles. Hydrolyzes exclusively monomeric GM1 ganglioside, but has no activity toward the miscellar form. Has lower sialidase activity for glycoproteins such as fetuin and TF/transferrin that carry a mixture of alpha-(2-&gt;3) and alpha-(2-&gt;6)-sialyl linkages. Cleaves milk oligosaccharide alpha-(2-&gt;3)-sialyllactose, but is inactive toward isomer alpha-(2-&gt;6)-sialyllactose isomer. Has no activity toward colominic acid, a homomer of alpha-(2-&gt;8)-linked Neu5Ac residues. The sequence is that of Sialidase-2 (Neu2) from Mus musculus (Mouse).